The sequence spans 267 residues: D-aminoacyl-tRNA deacylase (267 aa).

It belongs to the DtdA deacylase family. As to quaternary structure, monomer. The cofactor is Zn(2+).

It catalyses the reaction a D-aminoacyl-tRNA + H2O = a tRNA + a D-alpha-amino acid + H(+). The catalysed reaction is glycyl-tRNA(Ala) + H2O = tRNA(Ala) + glycine + H(+). In terms of biological role, D-aminoacyl-tRNA deacylase with broad substrate specificity. By recycling D-aminoacyl-tRNA to D-amino acids and free tRNA molecules, this enzyme counteracts the toxicity associated with the formation of D-aminoacyl-tRNA entities in vivo. The polypeptide is D-aminoacyl-tRNA deacylase (Methanothrix thermoacetophila (strain DSM 6194 / JCM 14653 / NBRC 101360 / PT) (Methanosaeta thermophila)).